A 433-amino-acid polypeptide reads, in one-letter code: MKNIMQSIFLLSLGCSKNTVDSERLIRQAELNGLHFTDQADDADIIIINTCGFIADAKEESINEILAATEKRHNGEIKALFVMGCLSALYSRELRAELPEVDHFFGTSDLEEIISVLGGSYRPSNIHERTLLTPPHYAWLKIAEGCSRTCSFCAIPKMRGRYRSEPIERLEKEASLLLKNGVRELNIISQDITQYGWDFDERSHLNDLLKKLAAQEFSWIRLLYAYPLHFPLDVIDTMREHANICNYLDMPVQHISDRILKSMQRGIDKKGTIGLLESIRKKNPDIRLRTTMIVGYPGETDREFDELLEFVAQLRFDRLGCFPYSHEEHTSAFKHLEDDIPEKIKKERVEALMELQESIAAERNRELEGRVMKVLVDEVEGSIAYARTEYDAPEVDNDVLVDIGDNPVQPGDFCTVTIEESSAYELHGRVNDC.

The region spanning 6 to 122 is the MTTase N-terminal domain; that stretch reads QSIFLLSLGC…IISVLGGSYR (117 aa). [4Fe-4S] cluster contacts are provided by C15, C51, C85, C146, C150, and C153. In terms of domain architecture, Radical SAM core spans 132–362; sequence LTPPHYAWLK…MELQESIAAE (231 aa). The region spanning 365–432 is the TRAM domain; that stretch reads RELEGRVMKV…AYELHGRVND (68 aa).

It belongs to the methylthiotransferase family. RimO subfamily. [4Fe-4S] cluster serves as cofactor.

Its subcellular location is the cytoplasm. It carries out the reaction L-aspartate(89)-[ribosomal protein uS12]-hydrogen + (sulfur carrier)-SH + AH2 + 2 S-adenosyl-L-methionine = 3-methylsulfanyl-L-aspartate(89)-[ribosomal protein uS12]-hydrogen + (sulfur carrier)-H + 5'-deoxyadenosine + L-methionine + A + S-adenosyl-L-homocysteine + 2 H(+). In terms of biological role, catalyzes the methylthiolation of an aspartic acid residue of ribosomal protein uS12. The chain is Ribosomal protein uS12 methylthiotransferase RimO from Prosthecochloris aestuarii (strain DSM 271 / SK 413).